The sequence spans 580 residues: Rho guanine nucleotide exchange factor 25 (580 aa).

The span at 48–67 shows a compositional bias: low complexity; sequence AASGLAAPSGPSSGLSSGPC. Disordered stretches follow at residues 48-76 and 128-157; these read AASGLAAPSGPSSGLSSGPCSPGPPGPVS and LEGPGDKTQPPEEETLSQAPESEEEQKKKA. The region spanning 160–336 is the DH domain; the sequence is RSMYVLSELV…CFVPKRCNDM (177 aa). The tract at residues 278–299 is important for binding to Rho GTPases; that stretch reads LGHRLQLNDLLIKPVQRIMKYQ. In terms of domain architecture, PH spans 348-466; the sequence is KLTAQGKLLG…WIKHVAQILE (119 aa). The tract at residues 467 to 493 is sufficient to bind activated GNAQ; the sequence is SQRDFLNALQSPIEYQRRESQTNSLGR. 2 disordered regions span residues 482–524 and 545–580; these read QRRE…GSLP and ALGDIPQAPHDSPPVSPTPKTPPCQARLAKLDEDEL. The segment covering 509–520 has biased composition (polar residues); it reads DQAQGSTHTPIN. Over residues 555–566 the composition is skewed to pro residues; sequence DSPPVSPTPKTP.

Interacts (via the DH domain) with POPDC1 (via the C-terminus cytoplasmic tail). Interacts with activated GNAQ and GNA11. Interacts with RHOA, CDC42 and RAC1. As to expression, isoform 1 and isoform 2 are highly expressed in excitable tissues, such as brain, heart and muscle. Also detected in kidney and liver.

The protein resides in the cell membrane. It localises to the cytoplasm. Its subcellular location is the myofibril. The protein localises to the sarcomere. Functionally, may play a role in actin cytoskeleton reorganization in different tissues since its activation induces formation of actin stress fibers. It works as a guanine nucleotide exchange factor for Rho family of small GTPases. Links specifically G alpha q/11-coupled receptors to RHOA activation. May be an important regulator of processes involved in axon and dendrite formation. In neurons seems to be an exchange factor primarily for RAC1. Involved in skeletal myogenesis. The polypeptide is Rho guanine nucleotide exchange factor 25 (ARHGEF25) (Homo sapiens (Human)).